The chain runs to 267 residues: uncharacterized protein (267 aa).

A disordered region spans residues 72-267 (LTENNNNNNT…EEKKKKKKKK (196 aa)). Residues 122–145 (DSVSSSTTTTIITNNKKINNNNNN) show a composition bias toward low complexity. Over residues 159–175 (ENEKSVQKSKKEKESPK) the composition is skewed to basic and acidic residues. Low complexity predominate over residues 194–218 (SESSSSSSSSSSSESSSSESESSSS).

This is an uncharacterized protein from Dictyostelium discoideum (Social amoeba).